The chain runs to 265 residues: 5'-nucleotidase SurE (265 aa).

A divalent metal cation contacts are provided by Asp-8, Asp-9, Ser-40, and Asn-98.

Belongs to the SurE nucleotidase family. A divalent metal cation is required as a cofactor.

Its subcellular location is the cytoplasm. It carries out the reaction a ribonucleoside 5'-phosphate + H2O = a ribonucleoside + phosphate. In terms of biological role, nucleotidase that shows phosphatase activity on nucleoside 5'-monophosphates. The polypeptide is 5'-nucleotidase SurE (Thermosynechococcus vestitus (strain NIES-2133 / IAM M-273 / BP-1)).